The sequence spans 83 residues: Large ribosomal subunit protein bL27 (83 aa).

Residues 1-25 form a disordered region; that stretch reads MAHKKGQGASRNGRDSESKRLGLKV.

Belongs to the bacterial ribosomal protein bL27 family.

In Chlamydia muridarum (strain MoPn / Nigg), this protein is Large ribosomal subunit protein bL27.